The primary structure comprises 111 residues: Large ribosomal subunit protein uL22 (111 aa).

It belongs to the universal ribosomal protein uL22 family. In terms of assembly, part of the 50S ribosomal subunit.

This protein binds specifically to 23S rRNA; its binding is stimulated by other ribosomal proteins, e.g. L4, L17, and L20. It is important during the early stages of 50S assembly. It makes multiple contacts with different domains of the 23S rRNA in the assembled 50S subunit and ribosome. In terms of biological role, the globular domain of the protein is located near the polypeptide exit tunnel on the outside of the subunit, while an extended beta-hairpin is found that lines the wall of the exit tunnel in the center of the 70S ribosome. The sequence is that of Large ribosomal subunit protein uL22 from Chlamydia caviae (strain ATCC VR-813 / DSM 19441 / 03DC25 / GPIC) (Chlamydophila caviae).